A 206-amino-acid polypeptide reads, in one-letter code: Ribosomal RNA large subunit methyltransferase E (206 aa).

5 residues coordinate S-adenosyl-L-methionine: G61, W63, D81, D97, and D122. Residue K162 is the Proton acceptor of the active site.

The protein belongs to the class I-like SAM-binding methyltransferase superfamily. RNA methyltransferase RlmE family.

The protein resides in the cytoplasm. The enzyme catalyses uridine(2552) in 23S rRNA + S-adenosyl-L-methionine = 2'-O-methyluridine(2552) in 23S rRNA + S-adenosyl-L-homocysteine + H(+). In terms of biological role, specifically methylates the uridine in position 2552 of 23S rRNA at the 2'-O position of the ribose in the fully assembled 50S ribosomal subunit. This chain is Ribosomal RNA large subunit methyltransferase E, found in Neisseria meningitidis serogroup C (strain 053442).